A 98-amino-acid polypeptide reads, in one-letter code: NADH-ubiquinone oxidoreductase chain 4L (98 aa).

Helical transmembrane passes span 2–22 (LSIS…MLMF), 29–49 (SLLC…LIIL), and 61–81 (ILLL…LVMV).

The protein belongs to the complex I subunit 4L family. In terms of assembly, core subunit of respiratory chain NADH dehydrogenase (Complex I) which is composed of 45 different subunits.

The protein localises to the mitochondrion inner membrane. The enzyme catalyses a ubiquinone + NADH + 5 H(+)(in) = a ubiquinol + NAD(+) + 4 H(+)(out). Core subunit of the mitochondrial membrane respiratory chain NADH dehydrogenase (Complex I) which catalyzes electron transfer from NADH through the respiratory chain, using ubiquinone as an electron acceptor. Part of the enzyme membrane arm which is embedded in the lipid bilayer and involved in proton translocation. The protein is NADH-ubiquinone oxidoreductase chain 4L (MT-ND4L) of Microcebus ravelobensis (Golden-brown mouse lemur).